The chain runs to 206 residues: Imidazoleglycerol-phosphate dehydratase (206 aa).

It belongs to the imidazoleglycerol-phosphate dehydratase family.

Its subcellular location is the cytoplasm. It catalyses the reaction D-erythro-1-(imidazol-4-yl)glycerol 3-phosphate = 3-(imidazol-4-yl)-2-oxopropyl phosphate + H2O. It functions in the pathway amino-acid biosynthesis; L-histidine biosynthesis; L-histidine from 5-phospho-alpha-D-ribose 1-diphosphate: step 6/9. The polypeptide is Imidazoleglycerol-phosphate dehydratase (Saccharopolyspora erythraea (strain ATCC 11635 / DSM 40517 / JCM 4748 / NBRC 13426 / NCIMB 8594 / NRRL 2338)).